Here is a 105-residue protein sequence, read N- to C-terminus: uncharacterized protein (105 aa).

This is an uncharacterized protein from Paracoccus denitrificans.